Here is a 318-residue protein sequence, read N- to C-terminus: Transcription factor FER-LIKE IRON DEFICIENCY-INDUCED TRANSCRIPTION FACTOR (318 aa).

The segment at 90–138 is disordered; sequence FDGDSVRAGGEEDEEDYNDGDDSSATTTNNDGTRKTKTDRSRTLISERR. Residues 100–111 show a composition bias toward acidic residues; that stretch reads EEDEEDYNDGDD. Residues 121 to 136 are compositionally biased toward basic and acidic residues; sequence GTRKTKTDRSRTLISE. The bHLH domain occupies 127–176; it reads TDRSRTLISERRRRGRMKDKLYALRSLVPNITKMDKASIVGDAVLYVQEL.

In terms of assembly, homodimer. In terms of tissue distribution, expressed in roots and inflorescence, and to a lower extent, in leaves and stems. In roots, confined to the outer cell layers, specifically in the differentiation zone. Also detected in the endodermis and inner tissues of the central cylinder.

It localises to the nucleus. In terms of biological role, transcription factor. Essential protein involved in iron uptake responses. Regulates FRO2 at the level of mRNA accumulation and IRT1 at the level of protein accumulation. Confers enhanced iron mobilization responses at low iron supply. This Arabidopsis thaliana (Mouse-ear cress) protein is Transcription factor FER-LIKE IRON DEFICIENCY-INDUCED TRANSCRIPTION FACTOR (FIT).